A 54-amino-acid polypeptide reads, in one-letter code: Ductus ejaculatorius peptide 99B (54 aa).

The first 21 residues, 1 to 21 (MKTPLFLLLVVLASLLGLALS), serve as a signal peptide directing secretion. Pyrrolidone carboxylic acid is present on Gln-22. Residue Asn-25 is glycosylated (N-linked (GlcNAc...) asparagine). Cys-40 and Cys-52 form a disulfide bridge. A propeptide spanning residues 53–54 (RK) is cleaved from the precursor.

The protein to paragonial peptide B. As to expression, ductus ejaculatorius.

It is found in the secreted. Its function is as follows. Induces post-mating responses; increased oviposition and reduced receptivity. The polypeptide is Ductus ejaculatorius peptide 99B (Dup99B) (Drosophila melanogaster (Fruit fly)).